A 437-amino-acid chain; its full sequence is GTPase Era, mitochondrial (437 aa).

The N-terminal 43 residues, 1 to 43 (MAAPSWRGARLVQSVLRVWQVGPHVARERVIPFSSLLGFQRRC), are a transit peptide targeting the mitochondrion. Positions 112-330 (RVLRVVLLGA…QYLLTQAQPG (219 aa)) constitute an Era-type G domain. The segment at 120–127 (GAPNAGKS) is G1. 120 to 127 (GAPNAGKS) contributes to the GTP binding site. Residues 146-150 (HTTRC) are G2. Residues 167–170 (DTPG) are G3. 167–171 (DTPGI) is a binding site for GTP. At serine 173 the chain carries Phosphoserine. Position 236–239 (236–239 (NKVD)) interacts with GTP. The interval 236–239 (NKVD) is G4. Residues 271-290 (HSHPGTHCPSPAVKDPNTQS) form a disordered region. The segment at 308–310 (LSA) is G5. Residues 360-437 (LPQEVPYNVQ…DIRLSVKLLK (78 aa)) enclose the KH type-2 domain.

The protein belongs to the TRAFAC class TrmE-Era-EngA-EngB-Septin-like GTPase superfamily. Era GTPase family.

The protein resides in the mitochondrion matrix. Its subcellular location is the mitochondrion inner membrane. In terms of biological role, probable GTPase that plays a role in the mitochondrial ribosomal small subunit assembly. Specifically binds the 12S mitochondrial rRNA (12S mt-rRNA) to a 33 nucleotide section delineating the 3' terminal stem-loop region. May act as a chaperone that protects the 12S mt-rRNA on the 28S mitoribosomal subunit during ribosomal small subunit assembly. The sequence is that of GTPase Era, mitochondrial (ERAL1) from Homo sapiens (Human).